A 184-amino-acid chain; its full sequence is Oligoribonuclease (184 aa).

Positions 10–172 constitute an Exonuclease domain; it reads LVWVDCEMTG…ADVLESIAEL (163 aa). Residue tyrosine 129 is part of the active site.

This sequence belongs to the oligoribonuclease family.

Its subcellular location is the cytoplasm. Its function is as follows. 3'-to-5' exoribonuclease specific for small oligoribonucleotides. The chain is Oligoribonuclease from Tropheryma whipplei (strain Twist) (Whipple's bacillus).